We begin with the raw amino-acid sequence, 399 residues long: MKERFSPLFEPLTLPNGSQLDNRFVLSPMVTNSSTKDGYVTQDDVSYALRRAASAPLQITGAAYVDPYGQLFEYGFSVTKDADISGLKELAQAMKAKGAKAVLQLTHAGRFASHALTKYGFVYGPSYMQLRSPQPHEVKPLTGQQIEELIAAYAQATRRAIQAGFDGVEVSSAQRLLIQTFFSTFSNKRTDSYGCQTLFNRSKLTLAVLQAVQQVINQEAPDGFIFGFRATPEETRGNDIGYSIDEFLQLMDWVLNIAKLDYLAIASWGRHVFRNTVRSPGPYYGRRVNQVVRDYLRNKLPVMATGGMNTPDKAIEALAHADFIGVSTPFVVDPEFAHKIKEGCEESIHLRIRPADLKSLAIPQASFKDIVPLMDYGESLPKESRTLFRSLTHNYKEIK.

Belongs to the NADH:flavin oxidoreductase/NADH oxidase family. Directly interacts with lipoylated GcvH-L (SpyM50867).

This is an uncharacterized protein from Streptococcus pyogenes serotype M5 (strain Manfredo).